The chain runs to 166 residues: MSKLAQKSGLVWLWLSLLLLVVDFASKTLVVSSMAYQESINLLPVFSITYVHNYGAAYSFLSDAGGWQRWFLSAIAIAISGLLVWWLKRLPATNKVLCAAYSLVLAGAIGNLYDRIAYGYVIDFIHVFYKNSHFPVFNVADCAICIGAALLLFDAFTGESPKEHKA.

A run of 4 helical transmembrane segments spans residues 11 to 31 (VWLW…TLVV), 42 to 62 (LLPV…SFLS), 67 to 87 (WQRW…VWWL), and 90 to 110 (LPAT…GAIG). Residues Asp-123 and Asp-141 contribute to the active site. The helical transmembrane segment at 133-153 (HFPVFNVADCAICIGAALLLF) threads the bilayer.

The protein belongs to the peptidase A8 family.

It localises to the cell inner membrane. The catalysed reaction is Release of signal peptides from bacterial membrane prolipoproteins. Hydrolyzes -Xaa-Yaa-Zaa-|-(S,diacylglyceryl)Cys-, in which Xaa is hydrophobic (preferably Leu), and Yaa (Ala or Ser) and Zaa (Gly or Ala) have small, neutral side chains.. It participates in protein modification; lipoprotein biosynthesis (signal peptide cleavage). In terms of biological role, this protein specifically catalyzes the removal of signal peptides from prolipoproteins. The sequence is that of Lipoprotein signal peptidase from Pseudoalteromonas translucida (strain TAC 125).